Here is a 229-residue protein sequence, read N- to C-terminus: Ribonuclease 3 (229 aa).

Residues 5–127 (LARLERQLGY…LIGAIYLDAG (123 aa)) enclose the RNase III domain. A Mg(2+)-binding site is contributed by Glu40. Asp44 is an active-site residue. Mg(2+) contacts are provided by Asp113 and Glu116. Glu116 is an active-site residue. Residues 154–224 (DPKTRLQEFL…AAAALIALGV (71 aa)) form the DRBM domain.

Belongs to the ribonuclease III family. In terms of assembly, homodimer. Mg(2+) serves as cofactor.

The protein resides in the cytoplasm. It carries out the reaction Endonucleolytic cleavage to 5'-phosphomonoester.. In terms of biological role, digests double-stranded RNA. Involved in the processing of primary rRNA transcript to yield the immediate precursors to the large and small rRNAs (23S and 16S). Processes some mRNAs, and tRNAs when they are encoded in the rRNA operon. Processes pre-crRNA and tracrRNA of type II CRISPR loci if present in the organism. The sequence is that of Ribonuclease 3 from Pseudomonas fluorescens (strain SBW25).